The sequence spans 45 residues: Scolopendra 20417.15 Da toxin (45 aa).

Residues 26–45 (KVANGQEAGQPGAXNMKELH) are disordered.

The protein belongs to the CRISP family. Venom allergen 5-like subfamily. Contains 3 disulfide bonds. In terms of tissue distribution, expressed by the venom gland.

It is found in the secreted. The protein is Scolopendra 20417.15 Da toxin of Scolopendra viridicornis nigra (Brazilian giant centipede).